We begin with the raw amino-acid sequence, 173 residues long: MTYFVIFLGICFMLGVLAVASNPSPYYGVVGLVVASVMGCGWLVSLGVSFVSLALFLVYLGGMLVVFVYSVSLAADPYPEAWGDWRVVGYGLGFVLVVWMGVVLGGLVDFWKVGVVTVDGGGVSFARLDFSGVAVFYSCGVGLFLVAGWGLLLALFVVLELVRGLSRGAIRAV.

5 helical membrane passes run 1-21, 27-47, 48-68, 87-107, and 139-159; these read MTYF…AVAS, YGVV…VSLG, VSFV…VVFV, VVGY…LGGL, and CGVG…FVVL.

The protein belongs to the complex I subunit 6 family. As to quaternary structure, core subunit of respiratory chain NADH dehydrogenase (Complex I) which is composed of 45 different subunits.

The protein resides in the mitochondrion inner membrane. It catalyses the reaction a ubiquinone + NADH + 5 H(+)(in) = a ubiquinol + NAD(+) + 4 H(+)(out). In terms of biological role, core subunit of the mitochondrial membrane respiratory chain NADH dehydrogenase (Complex I) which catalyzes electron transfer from NADH through the respiratory chain, using ubiquinone as an electron acceptor. Essential for the catalytic activity and assembly of complex I. The chain is NADH-ubiquinone oxidoreductase chain 6 (MT-ND6) from Gallus gallus (Chicken).